The primary structure comprises 666 residues: Long-chain-fatty-acid--CoA ligase ACSBG2 (666 aa).

ATP-binding positions include 230–238, 418–423, Asp496, and Arg624; these read TSGTTGIPK and ELYGLS.

The protein belongs to the ATP-dependent AMP-binding enzyme family. Bubblegum subfamily. As to expression, testis-specific.

The protein resides in the cytoplasm. It is found in the membrane. The enzyme catalyses a long-chain fatty acid + ATP + CoA = a long-chain fatty acyl-CoA + AMP + diphosphate. The catalysed reaction is (5Z,8Z,11Z,14Z)-eicosatetraenoate + ATP + CoA = (5Z,8Z,11Z,14Z)-eicosatetraenoyl-CoA + AMP + diphosphate. It catalyses the reaction hexadecanoate + ATP + CoA = hexadecanoyl-CoA + AMP + diphosphate. It carries out the reaction (9Z)-octadecenoate + ATP + CoA = (9Z)-octadecenoyl-CoA + AMP + diphosphate. The enzyme catalyses (9Z,12Z)-octadecadienoate + ATP + CoA = (9Z,12Z)-octadecadienoyl-CoA + AMP + diphosphate. The catalysed reaction is tetracosanoate + ATP + CoA = tetracosanoyl-CoA + AMP + diphosphate. In terms of biological role, catalyzes the conversion of fatty acids such as long chain and very long-chain fatty acids to their active form acyl-CoAs for both synthesis of cellular lipids, and degradation via beta-oxidation. Can activate diverse saturated, monosaturated and polyunsaturated fatty acids. Has increased ability to activate oleic and linoleic acid. May play a role in spermatogenesis. The protein is Long-chain-fatty-acid--CoA ligase ACSBG2 of Homo sapiens (Human).